The following is a 283-amino-acid chain: uncharacterized protein (283 aa).

A lipid anchor (N-myristoyl glycine; by host) is attached at G2. N31, N95, N105, N108, N137, and N147 each carry an N-linked (GlcNAc...) asparagine; by host glycan. Helical transmembrane passes span 181-201 and 250-270; these read IIAA…VVYF and FIVL…LDIP. N-linked (GlcNAc...) asparagine; by host glycosylation occurs at N277.

The protein resides in the membrane. This is an uncharacterized protein from Acanthamoeba polyphaga (Amoeba).